Reading from the N-terminus, the 445-residue chain is Phosphoglucosamine mutase 1 (445 aa).

Catalysis depends on Ser-102, which acts as the Phosphoserine intermediate. Mg(2+)-binding residues include Ser-102, Asp-241, Asp-243, and Asp-245. Ser-102 carries the post-translational modification Phosphoserine.

It belongs to the phosphohexose mutase family. Mg(2+) is required as a cofactor. In terms of processing, activated by phosphorylation.

The enzyme catalyses alpha-D-glucosamine 1-phosphate = D-glucosamine 6-phosphate. Its function is as follows. Catalyzes the conversion of glucosamine-6-phosphate to glucosamine-1-phosphate. The polypeptide is Phosphoglucosamine mutase 1 (Shewanella frigidimarina (strain NCIMB 400)).